Reading from the N-terminus, the 513-residue chain is Beta-glucosidase 5 (513 aa).

The N-terminal stretch at 1–26 (MAAAIAVVYLSLLLLLLHGAAPAVLG) is a signal peptide. Glutamine 46 provides a ligand contact to a beta-D-glucoside. Glutamate 192 functions as the Proton donor in the catalytic mechanism. The cysteines at positions 211 and 220 are disulfide-linked. N-linked (GlcNAc...) asparagine glycosylation is found at asparagine 224 and asparagine 273. The a beta-D-glucoside site is built by tyrosine 336 and glutamate 405. Glutamate 405 functions as the Nucleophile in the catalytic mechanism. N-linked (GlcNAc...) asparagine glycosylation occurs at asparagine 412. A beta-D-glucoside contacts are provided by residues tryptophan 447, 454-455 (EY), and tyrosine 463.

Belongs to the glycosyl hydrolase 1 family.

It catalyses the reaction Hydrolysis of terminal, non-reducing beta-D-glucosyl residues with release of beta-D-glucose.. In Oryza sativa subsp. japonica (Rice), this protein is Beta-glucosidase 5 (BGLU5).